We begin with the raw amino-acid sequence, 252 residues long: Adenosylcobinamide-GDP ribazoletransferase (252 aa).

7 consecutive transmembrane segments (helical) span residues 34-54 (GASF…IIYK), 55-75 (LCII…AGIV), 113-133 (YACL…CSIV), 138-158 (LIII…AFIG), 174-194 (IGKW…FFLM), 198-218 (FIYV…FNVF), and 230-250 (LLGA…CVII).

Belongs to the CobS family. Mg(2+) serves as cofactor.

The protein resides in the cell membrane. The enzyme catalyses alpha-ribazole + adenosylcob(III)inamide-GDP = adenosylcob(III)alamin + GMP + H(+). It carries out the reaction alpha-ribazole 5'-phosphate + adenosylcob(III)inamide-GDP = adenosylcob(III)alamin 5'-phosphate + GMP + H(+). It functions in the pathway cofactor biosynthesis; adenosylcobalamin biosynthesis; adenosylcobalamin from cob(II)yrinate a,c-diamide: step 7/7. Its function is as follows. Joins adenosylcobinamide-GDP and alpha-ribazole to generate adenosylcobalamin (Ado-cobalamin). Also synthesizes adenosylcobalamin 5'-phosphate from adenosylcobinamide-GDP and alpha-ribazole 5'-phosphate. In Clostridium kluyveri (strain NBRC 12016), this protein is Adenosylcobinamide-GDP ribazoletransferase.